Here is a 522-residue protein sequence, read N- to C-terminus: MEELQGYFEKDGSRQQPFLYPLLFQEYIYALAHDRSLNGNGSIFYEPLEIFGYDSKSSLALVKRLITRIYQQHFFLSSVNYSKQNRFVGHHHTNFFYSRFYSQMISDGFGIIVEIPFSLQLVSYLKEKEIPKSHNLRSIHSIFPFLEDKLVHFNYVSDILIPHPIHMEILVQILQCWIQDVPLLHFLRFFLHEYHNWNSFFITQNNSIYLFSKETKRLFRFLYNSYVYECEFVFVFLRKHSSYLRFTSFRTFLERRYFYVKMEHLQTEHLIIVCCDYFNGTLWSFKDPFMHYARCQGKAILVSKGTHLLMKKWKYNFVNLWQYYFYFWYQSYRIHINQLSKHSFHFLGYLSSLLKNSSTVRNKILDNSFLIDTLTTKFDTAVPVIFLIVSLSKAQFCTVSGHPISKPIWTDLSDSGIIERFGRICRNLSHYHSGSSKKQGLYRIKYILRLSCARTLARKHKSTVRTFLQKLGSRLLEEFFTEGEQDLSLILPKAILFPFQGSHRERIWYLDIIRINHLVNRS.

It belongs to the intron maturase 2 family. MatK subfamily.

It is found in the plastid. It localises to the chloroplast. Functionally, usually encoded in the trnK tRNA gene intron. Probably assists in splicing its own and other chloroplast group II introns. The polypeptide is Maturase K (Micranthus junceus (Micranthus plantagineus var. junceus)).